We begin with the raw amino-acid sequence, 393 residues long: Ribonucleoside-diphosphate reductase subunit M2 (393 aa).

Ser18 bears the Phosphoserine mark. Residues Asp142, Glu173, and His176 each contribute to the Fe cation site. The active site involves Tyr180. Residues Glu236, Glu270, and His273 each contribute to the Fe cation site.

This sequence belongs to the ribonucleoside diphosphate reductase small chain family. As to quaternary structure, heterodimer of a large and a small subunit. Fe cation serves as cofactor.

The protein resides in the cytoplasm. The catalysed reaction is a 2'-deoxyribonucleoside 5'-diphosphate + [thioredoxin]-disulfide + H2O = a ribonucleoside 5'-diphosphate + [thioredoxin]-dithiol. In terms of biological role, provides the precursors necessary for DNA synthesis. Catalyzes the biosynthesis of deoxyribonucleotides from the corresponding ribonucleotides. This Drosophila melanogaster (Fruit fly) protein is Ribonucleoside-diphosphate reductase subunit M2 (RnrS).